The chain runs to 316 residues: Serpentine receptor class delta-45 (316 aa).

7 helical membrane-spanning segments follow: residues 8–28 (VFYP…IFII), 42–62 (ILLV…LIQI), 91–111 (YFLT…TIYL), 128–148 (VTFF…SLIL), 184–204 (IIIT…GLLL), 234–254 (LQVF…LVLA), and 266–286 (FFSV…LYSV).

Belongs to the nematode receptor-like protein srd family.

The protein resides in the membrane. In Caenorhabditis elegans, this protein is Serpentine receptor class delta-45 (srd-45).